Reading from the N-terminus, the 453-residue chain is Luminescence regulatory protein LuxO (453 aa).

Positions 1-112 (MVEDTASVAA…RLRVTVNNAI (112 aa)) constitute a Response regulatory domain. 4-aspartylphosphate is present on Asp47. Residues 133–362 (FIGSSQTMQQ…LQNVLRNIVV (230 aa)) form the Sigma-54 factor interaction domain. ATP contacts are provided by residues 161 to 168 (GESGTGKE) and 224 to 233 (ADGGTLFLDE).

Functionally, acts negatively to control the expression of luminescence. At low cell density, LuxO is phosphorylated, and together with sigma-54, causes repression of the luxCDABEGH operon. This repression could be indirect, LuxO could activate a negative regulator of luminescence. At high cell density, LuxO is dephosphorylated and inactive, therefore the luxCDABEGH operon is not repressed and light is emitted. LuxO and sigma-54 have also a role in activating the production of siderophore and in regulating the rugose colony morphology phenotype. The chain is Luminescence regulatory protein LuxO (luxO) from Vibrio campbellii (strain ATCC BAA-1116).